Here is a 342-residue protein sequence, read N- to C-terminus: EIYNKDGNKLDLSGKVDGLHYFSNDDSADGDQSYMRLGFRGETQINNELTGYGEWEYQASLNTAESEDANNFTRVGFAGLKFGQWGSLDYGRNYGVMYDLAAWTDVLPEFGGDTYGADNFMFQRANGVLTYRNKDFFGLVDGLDVAVQYQGKNGSATESTMGRDVLRQNGDGYGMSLTYDLGEGFSAAGAMMASTRTSEQNGRQNPAIIGNGDRAETYTGGLKYXANNIYLAAVFTQTYNARIGVSSDSSHLGYADNAQNFEAVAQYQFDFGLRPSIAYVQSHARNVPGYSNQNLTKYVDVGASYFFNKNMLTYVDYKINLMDDTRLTRDAGINTDDIVAVG.

It belongs to the Gram-negative porin family. In terms of assembly, homotrimer.

The protein localises to the cell outer membrane. Forms pores that allow passive diffusion of small molecules across the outer membrane. In R.aquatilis OmpC is involved in the adhesion to wheat roots. This is Outer membrane porin C (ompC) from Rahnella aquatilis.